Reading from the N-terminus, the 413-residue chain is L-cysteine:1D-myo-inositol 2-amino-2-deoxy-alpha-D-glucopyranoside ligase (413 aa).

Zn(2+) is bound at residue C43. L-cysteinyl-5'-AMP contacts are provided by residues 43–46 (CGIT), T58, and 81–83 (NIT). Residues 45–55 (ITPYDATHLGH) carry the 'HIGH' region motif. A 'ERGGDP' region motif is present at residues 187-192 (ERGGDP). L-cysteinyl-5'-AMP is bound at residue W227. Residue C231 participates in Zn(2+) binding. L-cysteinyl-5'-AMP is bound at residue 249–251 (GND). Residue H256 participates in Zn(2+) binding. V283 lines the L-cysteinyl-5'-AMP pocket. Positions 289 to 293 (KMSKS) match the 'KMSKS' region motif.

The protein belongs to the class-I aminoacyl-tRNA synthetase family. MshC subfamily. Monomer. Zn(2+) is required as a cofactor.

The enzyme catalyses 1D-myo-inositol 2-amino-2-deoxy-alpha-D-glucopyranoside + L-cysteine + ATP = 1D-myo-inositol 2-(L-cysteinylamino)-2-deoxy-alpha-D-glucopyranoside + AMP + diphosphate + H(+). In terms of biological role, catalyzes the ATP-dependent condensation of GlcN-Ins and L-cysteine to form L-Cys-GlcN-Ins. This Gordonia bronchialis (strain ATCC 25592 / DSM 43247 / BCRC 13721 / JCM 3198 / KCTC 3076 / NBRC 16047 / NCTC 10667) (Rhodococcus bronchialis) protein is L-cysteine:1D-myo-inositol 2-amino-2-deoxy-alpha-D-glucopyranoside ligase.